The sequence spans 148 residues: MQLILLEKVANLGNLGDKVNVKAGYGRNYLLPYGKATAATAANVAAFEERRAELEKLAADKKASAETRAAQLAELEVTITATAGDEGKLFGSIGTHDIADALTASGVEVAKSEVRLPNGTIRNVGEFDVAVHLHSDVEATVRVVVVAA.

Belongs to the bacterial ribosomal protein bL9 family.

In terms of biological role, binds to the 23S rRNA. The polypeptide is Large ribosomal subunit protein bL9 (Pseudomonas syringae pv. tomato (strain ATCC BAA-871 / DC3000)).